Consider the following 276-residue polypeptide: Large ribosomal subunit protein uL2 (276 aa).

Disordered stretches follow at residues 26 to 45 (RSTP…GRNC) and 224 to 276 (AMNP…RGQK). Residues 259 to 276 (RDKKKASSKLIIKRRGQK) are compositionally biased toward basic residues.

Belongs to the universal ribosomal protein uL2 family. As to quaternary structure, part of the 50S ribosomal subunit. Forms a bridge to the 30S subunit in the 70S ribosome.

Functionally, one of the primary rRNA binding proteins. Required for association of the 30S and 50S subunits to form the 70S ribosome, for tRNA binding and peptide bond formation. It has been suggested to have peptidyltransferase activity; this is somewhat controversial. Makes several contacts with the 16S rRNA in the 70S ribosome. The polypeptide is Large ribosomal subunit protein uL2 (Oleidesulfovibrio alaskensis (strain ATCC BAA-1058 / DSM 17464 / G20) (Desulfovibrio alaskensis)).